A 460-amino-acid chain; its full sequence is Squalene synthase (460 aa).

Residues 425-445 traverse the membrane as a helical segment; sequence ISILFVFFIILVCLAVIFYVF.

Belongs to the phytoene/squalene synthase family. As to quaternary structure, interacts with pof14. Mg(2+) is required as a cofactor.

The protein localises to the endoplasmic reticulum membrane. It carries out the reaction 2 (2E,6E)-farnesyl diphosphate + NADPH + H(+) = squalene + 2 diphosphate + NADP(+). The catalysed reaction is 2 (2E,6E)-farnesyl diphosphate + NADH + H(+) = squalene + 2 diphosphate + NAD(+). Its pathway is terpene metabolism; lanosterol biosynthesis; lanosterol from farnesyl diphosphate: step 1/3. The protein operates within steroid metabolism; ergosterol biosynthesis. Its function is as follows. Squalene synthase; part of the third module of ergosterol biosynthesis pathway that includes by the late steps of the pathway. Erg9 produces squalene from 2 farnesyl pyrophosphate moieties. The third module or late pathway involves the ergosterol synthesis itself through consecutive reactions that mainly occur in the endoplasmic reticulum (ER) membrane. Firstly, the squalene synthase erg9 catalyzes the condensation of 2 farnesyl pyrophosphate moieties to form squalene, which is the precursor of all steroids. Secondly, squalene is converted into lanosterol by the consecutive action of the squalene epoxidase erg1 and the lanosterol synthase erg7. The lanosterol 14-alpha-demethylase erg11/cyp1 catalyzes C14-demethylation of lanosterol to produce 4,4'-dimethyl cholesta-8,14,24-triene-3-beta-ol. In the next steps, a complex process involving various demethylation, reduction and desaturation reactions catalyzed by the C-14 reductase erg24 and the C-4 demethylation complex erg25-erg26-erg27 leads to the production of zymosterol. Erg28 likely functions in the C-4 demethylation complex reaction by tethering erg26 and Erg27 to the endoplasmic reticulum or to facilitate interaction between these proteins. Then, the sterol 24-C-methyltransferase erg6 catalyzes the methyl transfer from S-adenosyl-methionine to the C-24 of zymosterol to form fecosterol. The C-8 sterol isomerase erg2 catalyzes the reaction which results in unsaturation at C-7 in the B ring of sterols and thus converts fecosterol to episterol. The sterol-C5-desaturases erg31 and erg32 then catalyze the introduction of a C-5 double bond in the B ring to produce 5-dehydroepisterol. The C-22 sterol desaturase erg5 further converts 5-dehydroepisterol into ergosta-5,7,22,24(28)-tetraen-3beta-ol by forming the C-22(23) double bond in the sterol side chain. Finally, ergosta-5,7,22,24(28)-tetraen-3beta-ol is substrate of the C-24(28) sterol reductase erg4 to produce ergosterol. In the genus Schizosaccharomyces, a second route exists between lanosterol and fecosterol, via the methylation of lanosterol to eburicol by erg6, followed by C14-demethylation by erg11/cyp1 and C4-demethylation by the demethylation complex erg25-erg26-erg27. The protein is Squalene synthase of Schizosaccharomyces pombe (strain 972 / ATCC 24843) (Fission yeast).